Reading from the N-terminus, the 305-residue chain is Small ribosomal subunit protein uS3 (305 aa).

The KH type-2 domain maps to 17–86; it reads IDEFFSEELS…DPQVDVQEVD (70 aa). Composition is skewed to acidic residues over residues 207 to 262 and 272 to 305; these read EPEG…EAET and AAEE…EEET. The tract at residues 207 to 305 is disordered; the sequence is EPEGDVEELL…EDETTDEEET (99 aa).

The protein belongs to the universal ribosomal protein uS3 family. Part of the 30S ribosomal subunit.

Its function is as follows. Binds the lower part of the 30S subunit head. The sequence is that of Small ribosomal subunit protein uS3 from Natronomonas pharaonis (strain ATCC 35678 / DSM 2160 / CIP 103997 / JCM 8858 / NBRC 14720 / NCIMB 2260 / Gabara) (Halobacterium pharaonis).